The sequence spans 238 residues: UDP-2,3-diacylglucosamine hydrolase (238 aa).

5 residues coordinate Mn(2+): Asp-8, His-10, Asp-41, Asn-78, and His-113. Residue 78 to 79 (NR) participates in substrate binding. Residues Asp-121, Ser-159, Asn-163, Lys-166, and His-194 each coordinate substrate. His-194 and His-196 together coordinate Mn(2+).

This sequence belongs to the LpxH family. The cofactor is Mn(2+).

It localises to the cell inner membrane. The enzyme catalyses UDP-2-N,3-O-bis[(3R)-3-hydroxytetradecanoyl]-alpha-D-glucosamine + H2O = 2-N,3-O-bis[(3R)-3-hydroxytetradecanoyl]-alpha-D-glucosaminyl 1-phosphate + UMP + 2 H(+). It functions in the pathway glycolipid biosynthesis; lipid IV(A) biosynthesis; lipid IV(A) from (3R)-3-hydroxytetradecanoyl-[acyl-carrier-protein] and UDP-N-acetyl-alpha-D-glucosamine: step 4/6. In terms of biological role, hydrolyzes the pyrophosphate bond of UDP-2,3-diacylglucosamine to yield 2,3-diacylglucosamine 1-phosphate (lipid X) and UMP by catalyzing the attack of water at the alpha-P atom. Involved in the biosynthesis of lipid A, a phosphorylated glycolipid that anchors the lipopolysaccharide to the outer membrane of the cell. The chain is UDP-2,3-diacylglucosamine hydrolase from Shewanella piezotolerans (strain WP3 / JCM 13877).